Here is a 277-residue protein sequence, read N- to C-terminus: NH(3)-dependent NAD(+) synthetase (277 aa).

36 to 43 (GLSGGIDS) serves as a coordination point for ATP. Position 42 (Asp-42) interacts with Mg(2+). Arg-118 is a binding site for deamido-NAD(+). An ATP-binding site is contributed by Thr-138. Mg(2+) is bound at residue Glu-143. Residues Lys-167 and Ser-189 each contribute to the ATP site.

This sequence belongs to the NAD synthetase family. As to quaternary structure, homodimer.

The enzyme catalyses deamido-NAD(+) + NH4(+) + ATP = AMP + diphosphate + NAD(+) + H(+). The protein operates within cofactor biosynthesis; NAD(+) biosynthesis; NAD(+) from deamido-NAD(+) (ammonia route): step 1/1. In terms of biological role, catalyzes the ATP-dependent amidation of deamido-NAD to form NAD. Uses ammonia as a nitrogen source. This Chlorobaculum parvum (strain DSM 263 / NCIMB 8327) (Chlorobium vibrioforme subsp. thiosulfatophilum) protein is NH(3)-dependent NAD(+) synthetase.